The sequence spans 206 residues: Adenine phosphoribosyltransferase (206 aa).

This sequence belongs to the purine/pyrimidine phosphoribosyltransferase family. As to quaternary structure, homodimer.

The protein localises to the cytoplasm. It catalyses the reaction AMP + diphosphate = 5-phospho-alpha-D-ribose 1-diphosphate + adenine. The protein operates within purine metabolism; AMP biosynthesis via salvage pathway; AMP from adenine: step 1/1. Functionally, catalyzes a salvage reaction resulting in the formation of AMP, that is energically less costly than de novo synthesis. The protein is Adenine phosphoribosyltransferase of Burkholderia mallei (strain NCTC 10229).